We begin with the raw amino-acid sequence, 638 residues long: Chaperone protein DnaK (638 aa).

Residue Thr-198 is modified to Phosphothreonine; by autocatalysis. Residues 603–618 (QQAQAQQAQGADADAQ) show a composition bias toward low complexity. The tract at residues 603–638 (QQAQAQQAQGADADAQQSKEDDVVDAEFEEVKDDKK) is disordered. Residues 624–638 (DVVDAEFEEVKDDKK) are compositionally biased toward acidic residues.

This sequence belongs to the heat shock protein 70 family.

In terms of biological role, acts as a chaperone. The chain is Chaperone protein DnaK from Vibrio campbellii (strain ATCC BAA-1116).